Consider the following 78-residue polypeptide: Dihydrofolate reductase type 2 (78 aa).

Residues Lys32–Ala36 and Val66–Tyr69 contribute to the NADP(+) site. Ile68 lines the substrate pocket.

Homotetramer.

The enzyme catalyses (6S)-5,6,7,8-tetrahydrofolate + NADP(+) = 7,8-dihydrofolate + NADPH + H(+). It participates in cofactor biosynthesis; tetrahydrofolate biosynthesis; 5,6,7,8-tetrahydrofolate from 7,8-dihydrofolate: step 1/1. Its function is as follows. Key enzyme in folate metabolism. Catalyzes an essential reaction for de novo glycine and purine synthesis, and for DNA precursor synthesis. This chain is Dihydrofolate reductase type 2, found in Escherichia coli.